The primary structure comprises 365 residues: Chorismate synthase (365 aa).

NADP(+)-binding residues include Arg-48 and Arg-54. FMN-binding positions include 131–133, 243–244, Gly-288, 303–307, and Arg-329; these read RSS, NA, and KPTSS.

This sequence belongs to the chorismate synthase family. In terms of assembly, homotetramer. Requires FMNH2 as cofactor.

It carries out the reaction 5-O-(1-carboxyvinyl)-3-phosphoshikimate = chorismate + phosphate. The protein operates within metabolic intermediate biosynthesis; chorismate biosynthesis; chorismate from D-erythrose 4-phosphate and phosphoenolpyruvate: step 7/7. Functionally, catalyzes the anti-1,4-elimination of the C-3 phosphate and the C-6 proR hydrogen from 5-enolpyruvylshikimate-3-phosphate (EPSP) to yield chorismate, which is the branch point compound that serves as the starting substrate for the three terminal pathways of aromatic amino acid biosynthesis. This reaction introduces a second double bond into the aromatic ring system. The polypeptide is Chorismate synthase (Rhizobium etli (strain ATCC 51251 / DSM 11541 / JCM 21823 / NBRC 15573 / CFN 42)).